We begin with the raw amino-acid sequence, 75 residues long: UPF0352 protein YejL (75 aa).

It belongs to the UPF0352 family.

The polypeptide is UPF0352 protein YejL (Shigella flexneri).